A 226-amino-acid chain; its full sequence is 7-cyano-7-deazaguanine synthase (226 aa).

An ATP-binding site is contributed by 11–21 (LSGGLDSATCL). Residues C191, C201, C204, and C207 each contribute to the Zn(2+) site.

Belongs to the QueC family. The cofactor is Zn(2+).

The enzyme catalyses 7-carboxy-7-deazaguanine + NH4(+) + ATP = 7-cyano-7-deazaguanine + ADP + phosphate + H2O + H(+). The protein operates within purine metabolism; 7-cyano-7-deazaguanine biosynthesis. In terms of biological role, catalyzes the ATP-dependent conversion of 7-carboxy-7-deazaguanine (CDG) to 7-cyano-7-deazaguanine (preQ(0)). This Aromatoleum aromaticum (strain DSM 19018 / LMG 30748 / EbN1) (Azoarcus sp. (strain EbN1)) protein is 7-cyano-7-deazaguanine synthase.